A 691-amino-acid polypeptide reads, in one-letter code: CREB-regulated transcription coactivator 2 (691 aa).

Residues 1-20 (MATSGANGPGSATASASNPR) are compositionally biased toward polar residues. Residues 1–30 (MATSGANGPGSATASASNPRKFSEKIALQK) form a disordered region. Position 2 is an N-acetylalanine (Ala-2). Arg-51 carries the asymmetric dimethylarginine; by PRMT6 modification. Residues Ser-70, Ser-86, and Ser-90 each carry the phosphoserine modification. 3 positions are modified to asymmetric dimethylarginine; by PRMT6: Arg-99, Arg-120, and Arg-123. Ser-136 is subject to Phosphoserine. Asymmetric dimethylarginine; by PRMT6 is present on residues Arg-161 and Arg-168. Residue Thr-169 is modified to Phosphothreonine. Ser-171 is modified (phosphoserine; by AMPK, MARK2, SIK1 and SIK2). The span at 174–186 (ALHTSVMNPNPQD) shows a compositional bias: polar residues. The disordered stretch occupies residues 174–195 (ALHTSVMNPNPQDTYPGPTPPS). Thr-192 is subject to Phosphothreonine. Lys-234 is covalently cross-linked (Glycyl lysine isopeptide (Lys-Gly) (interchain with G-Cter in SUMO2)). The short motif at 271–287 (TGGSLPDLTNLHFPPPL) is the Nuclear export signal element. Phosphoserine; by MARK2 is present on Ser-274. Disordered regions lie at residues 280–306 (NLHF…GGNS) and 335–491 (HSPL…YSPP). Phosphoserine is present on residues Ser-306, Ser-368, Ser-393, Ser-433, and Ser-456. Low complexity-rich tracts occupy residues 335–383 (HSPL…HALP) and 390–411 (PSLS…SPVL). Polar residues predominate over residues 447 to 468 (SQQQLPKQFSPTMSPTLSSITQ). Tyr-488 carries the post-translational modification Phosphotyrosine. Phosphoserine occurs at positions 489 and 492. Position 501 is a phosphothreonine (Thr-501). The tract at residues 513–543 (CLVQPSGGQPPGRQPHYGTLYPPGSSGHGQQ) is disordered. A phosphoserine mark is found at Ser-611, Ser-621, and Ser-622.

This sequence belongs to the TORC family. Binds, as a tetramer, through its N-terminal region, with the bZIP domain of CREB1. 'Arg-314' in the bZIP domain of CREB1 is essential for this interaction. Interaction, via its C-terminal, with TAF4, enhances recruitment of TAF4 to CREB1. Interacts with SIK2. Interacts with 14-3-3 proteins, YWHAB and YWHAG. Interacts (probably when phosphorylated at Ser-171) with YWHAE. Interacts with calmodulin-dependent catalytic subunit PPP3CA/calcineurin A. Interaction with COP1 mediates nuclear export and degradation of CRTC2. In terms of processing, phosphorylation/dephosphorylation states of Ser-171 are required for regulating transduction of CREB activity. CRTCs/TORCs are inactive when phosphorylated, and active when dephosphorylated at this site. This primary site of phosphorylation, is regulated by cAMP and calcium levels and is dependent on the phosphorylation of SIKs (SIK1 and SIK2) by LKB1. Following adenylyl cyclase activation, dephosphorylated at Ser-171 by PPP3CA/calcineurin A resulting in CRTC2 dissociation from 14-3-3 proteins and PPP3CA. Both insulin and AMPK increase this phosphorylation of CRTC2 while glucagon suppresses it. Phosphorylation at Ser-274 by MARK2 is induced under low glucose conditions and dephosphorylated in response to glucose influx. Phosphorylation at Ser-274 promotes interaction with 14-3-3 proteins and translocation to the cytoplasm. Asymmetric dimethylation of arginine resisues by PRMT6 enhances the association of CRTC2 with CREB on the promoters of gluconeogenic genes.

It localises to the cytoplasm. Its subcellular location is the nucleus. In terms of biological role, transcriptional coactivator for CREB1 which activates transcription through both consensus and variant cAMP response element (CRE) sites. Acts as a coactivator, in the SIK/TORC signaling pathway, being active when dephosphorylated and acts independently of CREB1 'Ser-133' phosphorylation. Enhances the interaction of CREB1 with TAF4. Regulates gluconeogenesis as a component of the LKB1/AMPK/TORC2 signaling pathway. Regulates the expression of specific genes such as the steroidogenic gene, StAR. Potent coactivator of PPARGC1A and inducer of mitochondrial biogenesis in muscle cells. This is CREB-regulated transcription coactivator 2 (Crtc2) from Rattus norvegicus (Rat).